The chain runs to 895 residues: WD repeat-containing protein 36 (895 aa).

8 WD repeats span residues 30-63 (VVRF…LVAV), 72-101 (CCMA…IVHT), 110-143 (HFLQ…LQLT), 152-186 (SAIL…LLYT), 193-230 (GVTA…MKFR), 237-272 (TSIS…INQM), 277-320 (STAI…RFRM), and 327-361 (TNIR…FNKS). 2 positions are modified to phosphoserine: Ser382 and Ser399. WD repeat units follow at residues 389-428 (TKFA…GAYF), 441-475 (ATAV…HRGS), 486-522 (VRGV…HSVS), 527-562 (PNIM…VREF), 564-605 (GHQG…DCFL), and 607-645 (DSAP…SVVS).

As to quaternary structure, part of the small subunit (SSU) processome, composed of more than 70 proteins and the RNA chaperone small nucleolar RNA (snoRNA) U3. In terms of tissue distribution, expressed in heart, placenta, liver, skeletal muscle, kidney and pancreas. In ocular tissues, strong expression in iris, sclera, ciliary muscle, ciliary body, retina and optic nerve.

It localises to the nucleus. The protein resides in the nucleolus. Part of the small subunit (SSU) processome, first precursor of the small eukaryotic ribosomal subunit. During the assembly of the SSU processome in the nucleolus, many ribosome biogenesis factors, an RNA chaperone and ribosomal proteins associate with the nascent pre-rRNA and work in concert to generate RNA folding, modifications, rearrangements and cleavage as well as targeted degradation of pre-ribosomal RNA by the RNA exosome. Involved in the nucleolar processing of SSU 18S rRNA. Involved in T-cell activation and highly coregulated with IL2. This chain is WD repeat-containing protein 36, found in Homo sapiens (Human).